Reading from the N-terminus, the 627-residue chain is Protein EXECUTER 2, chloroplastic (627 aa).

Disordered stretches follow at residues 1–34 (MSAATACASPAAARPPLHIPLRSPPSAAHLPSAA), 212–277 (PTKG…AKDS), and 308–359 (EAEL…SKSP). Residues 1–45 (MSAATACASPAAARPPLHIPLRSPPSAAHLPSAAASRRASSAACR) constitute a chloroplast transit peptide. A compositionally biased stretch (low complexity) spans 217-229 (SSASSVSSATAES). Composition is skewed to acidic residues over residues 308-321 (EAELASDSSEELVQ) and 331-353 (SLEDSTTEELQQDDVPDGDSDSA).

It is found in the plastid. Its subcellular location is the chloroplast. Its function is as follows. Together with EX1, enables higher plants to perceive singlet oxygen as a stress signal in plastid that activates a genetically determined nuclear stress response program which triggers a programmed cell death (PCD). This transfer of singlet oxygen-induced stress-related signals from the plastid to the nucleus that triggers genetically controlled PCD pathway is unique to photosynthetic eukaryotes and operates under mild stress conditions, impeding photosystem II (PSII) without causing photooxidative damage of the plant. This chain is Protein EXECUTER 2, chloroplastic, found in Oryza sativa subsp. japonica (Rice).